Reading from the N-terminus, the 848-residue chain is Trimethylamine-N-oxide reductase 1 (848 aa).

Positions 1–39 (MNNNDLFQASRRRFLAQLGGLTVAGMLGPSLLTSRRATA) form a signal peptide, tat-type signal. Ser191 is a Mo-bis(molybdopterin guanine dinucleotide) binding site.

Belongs to the prokaryotic molybdopterin-containing oxidoreductase family. In terms of assembly, interacts with the N-terminal domain of TorC. Requires Mo-bis(molybdopterin guanine dinucleotide) as cofactor. Post-translationally, predicted to be exported by the Tat system. The position of the signal peptide cleavage has not been experimentally proven.

Its subcellular location is the periplasm. It carries out the reaction trimethylamine + 2 Fe(III)-[cytochrome c] + H2O = trimethylamine N-oxide + 2 Fe(II)-[cytochrome c] + 3 H(+). Reduces trimethylamine-N-oxide (TMAO) into trimethylamine; an anaerobic reaction coupled to energy-yielding reactions. The protein is Trimethylamine-N-oxide reductase 1 (torA) of Escherichia coli O157:H7.